The sequence spans 553 residues: Glutamate--tRNA ligase (553 aa).

The 'HIGH' region signature appears at 103–113 (PNPSGPLHIGH).

Belongs to the class-I aminoacyl-tRNA synthetase family. Glutamate--tRNA ligase type 2 subfamily.

The protein resides in the cytoplasm. The enzyme catalyses tRNA(Glu) + L-glutamate + ATP = L-glutamyl-tRNA(Glu) + AMP + diphosphate. Functionally, catalyzes the attachment of glutamate to tRNA(Glu) in a two-step reaction: glutamate is first activated by ATP to form Glu-AMP and then transferred to the acceptor end of tRNA(Glu). This Methanothermobacter thermautotrophicus (strain ATCC 29096 / DSM 1053 / JCM 10044 / NBRC 100330 / Delta H) (Methanobacterium thermoautotrophicum) protein is Glutamate--tRNA ligase.